The following is a 374-amino-acid chain: Probable dual-specificity RNA methyltransferase RlmN (374 aa).

Glu108 acts as the Proton acceptor in catalysis. The Radical SAM core domain maps to 114-361; the sequence is YSDRNTVCIS…SCTVRDTRGR (248 aa). A disulfide bond links Cys121 and Cys367. Cys128, Cys132, and Cys135 together coordinate [4Fe-4S] cluster. S-adenosyl-L-methionine-binding positions include 188–189, Ser222, 245–247, and Asn324; these read GE and SLH. Residue Cys367 is the S-methylcysteine intermediate of the active site.

The protein belongs to the radical SAM superfamily. RlmN family. [4Fe-4S] cluster serves as cofactor.

The protein localises to the cytoplasm. The enzyme catalyses adenosine(2503) in 23S rRNA + 2 reduced [2Fe-2S]-[ferredoxin] + 2 S-adenosyl-L-methionine = 2-methyladenosine(2503) in 23S rRNA + 5'-deoxyadenosine + L-methionine + 2 oxidized [2Fe-2S]-[ferredoxin] + S-adenosyl-L-homocysteine. The catalysed reaction is adenosine(37) in tRNA + 2 reduced [2Fe-2S]-[ferredoxin] + 2 S-adenosyl-L-methionine = 2-methyladenosine(37) in tRNA + 5'-deoxyadenosine + L-methionine + 2 oxidized [2Fe-2S]-[ferredoxin] + S-adenosyl-L-homocysteine. In terms of biological role, specifically methylates position 2 of adenine 2503 in 23S rRNA and position 2 of adenine 37 in tRNAs. In Mycobacterium sp. (strain JLS), this protein is Probable dual-specificity RNA methyltransferase RlmN.